The primary structure comprises 314 residues: tRNA pseudouridine synthase B (314 aa).

His-43 lines the substrate pocket. Asp-48 (nucleophile) is an active-site residue. The substrate site is built by Tyr-76, Tyr-179, and Leu-200.

It belongs to the pseudouridine synthase TruB family. Type 1 subfamily.

It carries out the reaction uridine(55) in tRNA = pseudouridine(55) in tRNA. Its function is as follows. Responsible for synthesis of pseudouridine from uracil-55 in the psi GC loop of transfer RNAs. The chain is tRNA pseudouridine synthase B from Cronobacter sakazakii (strain ATCC BAA-894) (Enterobacter sakazakii).